We begin with the raw amino-acid sequence, 263 residues long: 3-methyl-2-oxobutanoate hydroxymethyltransferase (263 aa).

The Mg(2+) site is built by aspartate 44 and aspartate 83. Residues 44 to 45, aspartate 83, and lysine 112 contribute to the 3-methyl-2-oxobutanoate site; that span reads DS. Residue glutamate 114 participates in Mg(2+) binding. Glutamate 181 serves as the catalytic Proton acceptor.

It belongs to the PanB family. As to quaternary structure, homodecamer; pentamer of dimers. Requires Mg(2+) as cofactor.

It localises to the cytoplasm. The catalysed reaction is 3-methyl-2-oxobutanoate + (6R)-5,10-methylene-5,6,7,8-tetrahydrofolate + H2O = 2-dehydropantoate + (6S)-5,6,7,8-tetrahydrofolate. The protein operates within cofactor biosynthesis; (R)-pantothenate biosynthesis; (R)-pantoate from 3-methyl-2-oxobutanoate: step 1/2. Its function is as follows. Catalyzes the reversible reaction in which hydroxymethyl group from 5,10-methylenetetrahydrofolate is transferred onto alpha-ketoisovalerate to form ketopantoate. In Nitrosospira multiformis (strain ATCC 25196 / NCIMB 11849 / C 71), this protein is 3-methyl-2-oxobutanoate hydroxymethyltransferase.